The chain runs to 107 residues: HTH-type transcriptional regulator Rv2034 (107 aa).

The 93-residue stretch at 1–93 (MSTYRSPDRA…DLDRFWTRAL (93 aa)) folds into the HTH arsR-type domain. The segment at residues 33–56 (VGELARDLPVSRPAVSQHLKVLKT) is a DNA-binding region (H-T-H motif).

Homodimer.

Its activity is regulated as follows. DNA-binding ability is not susceptible to zinc, nickel, cobalt, cadmium, lead, copper and manganese ions. Functionally, involved in the regulation of lipid metabolism and hypoxic response. Positively regulates transcription of various genes, such as phoP, groEL2 and dosR. Negatively regulates its own transcription. Acts by binding to a specific palindromic sequence motif in promoter regions. In Mycobacterium tuberculosis (strain ATCC 25618 / H37Rv), this protein is HTH-type transcriptional regulator Rv2034.